Here is a 209-residue protein sequence, read N- to C-terminus: Histidine biosynthesis bifunctional protein HisIE (209 aa).

A phosphoribosyl-AMP cyclohydrolase region spans residues 1–116 (MKQADELRFN…EEQAADRFGI (116 aa)). Positions 117-209 (MNELERVIAE…LKKRHSEIEE (93 aa)) are phosphoribosyl-ATP pyrophosphohydrolase.

This sequence in the N-terminal section; belongs to the PRA-CH family. The protein in the C-terminal section; belongs to the PRA-PH family.

The protein resides in the cytoplasm. It carries out the reaction 1-(5-phospho-beta-D-ribosyl)-ATP + H2O = 1-(5-phospho-beta-D-ribosyl)-5'-AMP + diphosphate + H(+). It catalyses the reaction 1-(5-phospho-beta-D-ribosyl)-5'-AMP + H2O = 1-(5-phospho-beta-D-ribosyl)-5-[(5-phospho-beta-D-ribosylamino)methylideneamino]imidazole-4-carboxamide. The protein operates within amino-acid biosynthesis; L-histidine biosynthesis; L-histidine from 5-phospho-alpha-D-ribose 1-diphosphate: step 2/9. It functions in the pathway amino-acid biosynthesis; L-histidine biosynthesis; L-histidine from 5-phospho-alpha-D-ribose 1-diphosphate: step 3/9. The sequence is that of Histidine biosynthesis bifunctional protein HisIE (hisI) from Bacillus subtilis (strain 168).